We begin with the raw amino-acid sequence, 465 residues long: Poly(A) polymerase I (465 aa).

Catalysis depends on residues aspartate 80, aspartate 82, and aspartate 162. The disordered stretch occupies residues serine 429–alanine 465. Positions arginine 448 to proline 459 are enriched in basic residues.

This sequence belongs to the tRNA nucleotidyltransferase/poly(A) polymerase family.

It carries out the reaction RNA(n) + ATP = RNA(n)-3'-adenine ribonucleotide + diphosphate. Adds poly(A) tail to the 3' end of many RNAs, which usually targets these RNAs for decay. Plays a significant role in the global control of gene expression, through influencing the rate of transcript degradation, and in the general RNA quality control. This Escherichia coli O157:H7 protein is Poly(A) polymerase I.